Here is a 122-residue protein sequence, read N- to C-terminus: Large ribosomal subunit protein uL14 (122 aa).

It belongs to the universal ribosomal protein uL14 family. In terms of assembly, part of the 50S ribosomal subunit. Forms a cluster with proteins L3 and L19. In the 70S ribosome, L14 and L19 interact and together make contacts with the 16S rRNA in bridges B5 and B8.

Binds to 23S rRNA. Forms part of two intersubunit bridges in the 70S ribosome. This is Large ribosomal subunit protein uL14 from Psychrobacter sp. (strain PRwf-1).